The sequence spans 135 residues: Succinate dehydrogenase assembly factor 3, mitochondrial (135 aa).

The segment at 73–101 (KENSNNNDNYNNNNNDNNNDNNNFINIGQ) is disordered. The span at 75 to 95 (NSNNNDNYNNNNNDNNNDNNN) shows a compositional bias: low complexity.

This sequence belongs to the complex I LYR family. SDHAF3 subfamily. As to quaternary structure, interacts with the iron-sulfur protein subunit within the SDH catalytic dimer.

It is found in the mitochondrion matrix. Its function is as follows. Plays an essential role in the assembly of succinate dehydrogenase (SDH), an enzyme complex (also referred to as respiratory complex II) that is a component of both the tricarboxylic acid (TCA) cycle and the mitochondrial electron transport chain, and which couples the oxidation of succinate to fumarate with the reduction of ubiquinone (coenzyme Q) to ubiquinol. Promotes maturation of the iron-sulfur protein subunit of the SDH catalytic dimer, protecting it from the deleterious effects of oxidants. May act together with SDHAF1. The chain is Succinate dehydrogenase assembly factor 3, mitochondrial (acn9) from Dictyostelium discoideum (Social amoeba).